The primary structure comprises 539 residues: Sporozoite-associated protein (539 aa).

N-linked (GlcNAc...) asparagine glycosylation is found at N31, N90, N102, N149, and N167. The tract at residues 126 to 153 is disordered; it reads LTQSPPPAAAPQSPSPRAILSPRNVSKT. Residues 192-215 show a composition bias toward low complexity; it reads VVAEKSNTPTTPKTTPNGKWTGKN. A disordered region spans residues 192 to 231; the sequence is VVAEKSNTPTTPKTTPNGKWTGKNANATIETSNTDHTPPS. Residues 216–228 are compositionally biased toward polar residues; the sequence is ANATIETSNTDHT. 3 N-linked (GlcNAc...) asparagine glycosylation sites follow: N217, N271, and N288. Residues 303-355 form a disordered region; that stretch reads TLISRAQDDKPGTKGGSDETSSSTAASNERQPMFPNDNDDDDIDQTYCPGVES. Positions 320–332 are enriched in polar residues; it reads DETSSSTAASNER. N-linked (GlcNAc...) asparagine glycans are attached at residues N427 and N503.

As to expression, saliva (at protein level). Female salivary gland. Female midgut.

It localises to the secreted. Functionally, binds heparan sulfate proteoglycans present on the mammalian cell surface. Modulates host immune responses at the site of inoculation via decreasing the expression of TNF-alpha/TNF, IL-1beta/IL1B, IFN-gamma/IFNG, IL4, MMP9, TGF-beta and ICAM1. Its function is as follows. (Microbial infection) Interacts with the surface of Plasmodium berghei sporozoites. Promotes Plasmodium berghei transmission to the mouse host. Does not affect Plasmodium berghei sporozoite viability. (Microbial infection) Interacts with the surface of Plasmodium falciparum sporozoites. The protein is Sporozoite-associated protein of Anopheles gambiae (African malaria mosquito).